We begin with the raw amino-acid sequence, 540 residues long: FAD-binding monooxygenase lolF1 (540 aa).

FAD is bound by residues 43 to 46 (VWRE) and 55 to 58 (DSLF). NADP(+) is bound by residues 53–55 (AVD), 182–188 (TGPSGVQ), and 205–206 (QS).

Belongs to the FAD-binding monooxygenase family. FAD serves as cofactor.

It participates in alkaloid biosynthesis. Its function is as follows. FAD-binding monooxygenase; part of the gene cluster that mediates the biosynthesis of loline alkaloids, potent insecticidal agents composed of a pyrrolizidine ring system and an uncommon ether bridge linking carbons 2 and 7. Lolines are structurally differentiated by the various modifications of the L-amino group and include norloline, loline, N-methylloline, N-acetylloline, N-acetylnorloline, and N-formylloline. The first committed step is the condensation of O-acetyl-L-homoserine (derived from L-aspartic acid) and L-proline, probably catalyzed by the gamma-type pyridoxal 5'-phosphate(PLP)-dependent enzyme lolC, to give the diamino diacid, NACPP. Ensuing cyclization, decarboxylation, and acetylation steps yield 1-exo-acetamidopyrrolizidine (AcAP). LolO is required for installation of the ether bridge upon the pathway intermediate, 1-exo-acetamidopyrrolizidine (AcAP). In sequential 2-oxoglutarate- and O(2)-consuming steps, lolO removes hydrogens from C2 and C7 of AcAP to form both carbon-oxygen bonds in N-acetylnorloline (NANL), the precursor to all other lolines. The enzymes lolD, lolE, lolF and lolT have also been proposed to be involved in the ether-bridge installation. Further processing of the exocyclic moiety of NANL by fungal N-acetamidase (LolN), methyltransferase (LolM), and cytochrome P450 (LolP) enzymes, with occasional involvement of a plant acetyltransferase, generates the other known lolines. LolN transforms NANL to norlonine which is monomethylated and dimethylated to respectively lonine and N-methyllonine (NML) by lolM. LolP catalyzes hydroxylation of the methyl group in N-methylloline (NML) and further oxygenation to N-formylloline (NFL). A plant acetyltransferase is responsible for the acetylation of loline to form N-acetylloline (NAL). LolA might interact with aspartate kinase to prevent feedback inhibition of its activity by these end products and thereby promote production of L-homoserine from L-aspartate. This is FAD-binding monooxygenase lolF1 from Epichloe uncinata (Endophyte fungus).